A 988-amino-acid polypeptide reads, in one-letter code: Voltage-gated delayed rectifier potassium channel KCNH5 (988 aa).

The Cytoplasmic segment spans residues 1–217 (MPGGKRGLVA…LHYCAFKTTW (217 aa)). The region spanning 14–86 (TFLENIVRRS…TIEKVRQTFD (73 aa)) is the PAS domain. One can recognise a PAC domain in the interval 91 to 143 (NCFEVLLYKKNRTPVWFYMQIAPIRNEHEKVVLFLCTFKDITLFKQPIEDDST). The helical transmembrane segment at 218–238 (DWVILILTFYTAIMVPYNVSF) threads the bilayer. At 239–243 (KTKQN) the chain is on the extracellular side. A helical membrane pass occupies residues 244 to 264 (NIAWLVLDSVVDVIFLVDIVL). Topologically, residues 265–291 (NFHTTFVGPGGEVISDPKLIRMNYLKT) are cytoplasmic. Residues 292 to 312 (WFVIDLLSCLPYDIINAFENV) traverse the membrane as a helical segment. Over 313–319 (DEGISSL) the chain is Extracellular. The helical; Voltage-sensor transmembrane segment at 320–340 (FSSLKVVRLLRLGRVARKLDH) threads the bilayer. At 341–346 (YLEYGA) the chain is on the cytoplasmic side. Residues 347–367 (AVLVLLVCVFGLVAHWLACIW) traverse the membrane as a helical segment. Residues 368 to 419 (YSIGDYEVIDEVTNTIQIDSWLYQLALSIGTPYRYNTSAGIWEGGPSKDSLY) lie on the Extracellular side of the membrane. N-linked (GlcNAc...) asparagine glycosylation occurs at Asn403. The pore-forming intramembrane region spans 420-440 (VSSLYFTMTSLTTIGFGNIAP). A Selectivity filter motif is present at residues 432–437 (TIGFGN). Residues 441-446 (TTDVEK) lie on the Extracellular side of the membrane. The helical transmembrane segment at 447–467 (MFSVAMMMVGSLLYATIFGNV) threads the bilayer. Over 468 to 988 (TTIFQQMYAN…PESDKDEINF (521 aa)) the chain is Cytoplasmic. An a nucleoside 3',5'-cyclic phosphate-binding site is contributed by 550–667 (AFRLASDGCL…NSFSRNLTLT (118 aa)). A calmodulin-binding region spans residues 704–715 (HPVRKLFQKFKQ). Residues 718-742 (ELRNQGSAQSDPERSQLQVESRPLQ) are disordered. Polar residues predominate over residues 721-742 (NQGSAQSDPERSQLQVESRPLQ). A Glycyl lysine isopeptide (Lys-Gly) (interchain with G-Cter in ubiquitin) cross-link involves residue Lys785. Disordered regions lie at residues 839 to 897 (LLSE…AKHP) and 946 to 965 (SVPQTSSPKPQIPLQVPPQI). Positions 871–885 (SDLRLDKAGEARSPL) are enriched in basic and acidic residues. Ser883 carries the phosphoserine modification. The segment at 909–948 (TLQEVKHELKEDIQLLSCRMTALEKQVAEILKLLSEKSVP) is CAD (involved in subunit assembly).

This sequence belongs to the potassium channel family. H (Eag) (TC 1.A.1.20) subfamily. Kv10.2/KCNH5 sub-subfamily. Homotetramer. The potassium channel is probably composed of a homo- or heterotetrameric complex of pore-forming alpha subunits that can associate with modulating beta subunits. Heteromultimer with KCNH1/EAG. In terms of tissue distribution, detected in adult testis and in embryonic and adult brain, but not in other tissues. Highly expressed in specific brain areas, such as neocortex, olfactory bulb, primary olfactory cortex and brain stem. In cortex, expression is concentrated in a narrow band toward the middle lamella (layer IV). Moderately expressed in spinal cord, dorsal thalamic nuclei, medial hypothalamus, colliculus, lateral lemniscus, pontine nuclei and Islands of Calleja.

Its subcellular location is the membrane. It catalyses the reaction K(+)(in) = K(+)(out). With respect to regulation, inhibited by low nanomolar concentrations of cytosolic calcium. In terms of biological role, pore-forming (alpha) subunit of a voltage-gated delayed rectifier potassium channel that mediates outward-rectifying potassium currents which, on depolarization, reaches a steady-state level and do not inactivate. The kinetic is characterized by a slow activation time course and a small voltage dependence of the activation time constants, therefore, starts to open at more negative voltages. The activation kinetics depend on the prepulse potential and external divalent cation concentration. The time course of activation is biphasic with a fast and a slowly activating current component. With negative prepulses, the current activation is delayed and slowed down several fold, whereas more positive prepulses speed up activation, therefore the activation rate depends on holding potential. The chain is Voltage-gated delayed rectifier potassium channel KCNH5 from Rattus norvegicus (Rat).